Here is a 118-residue protein sequence, read N- to C-terminus: UPF0295 protein BA_0538/GBAA_0538/BAS0506 (118 aa).

The next 2 helical transmembrane spans lie at 12–32 (IRTFALSLVFIGLFIAYLGVF) and 43–63 (FMMVGFLAVIASTVVYFWIGM).

This sequence belongs to the UPF0295 family.

It is found in the cell membrane. This chain is UPF0295 protein BA_0538/GBAA_0538/BAS0506, found in Bacillus anthracis.